Consider the following 506-residue polypeptide: Histidine ammonia-lyase (506 aa).

Residues 143 to 145 (ASG) constitute a cross-link (5-imidazolinone (Ala-Gly)). A 2,3-didehydroalanine (Ser) modification is found at Ser-144.

The protein belongs to the PAL/histidase family. Contains an active site 4-methylidene-imidazol-5-one (MIO), which is formed autocatalytically by cyclization and dehydration of residues Ala-Ser-Gly.

It localises to the cytoplasm. It carries out the reaction L-histidine = trans-urocanate + NH4(+). The protein operates within amino-acid degradation; L-histidine degradation into L-glutamate; N-formimidoyl-L-glutamate from L-histidine: step 1/3. This Enterobacter sp. (strain 638) protein is Histidine ammonia-lyase.